A 195-amino-acid polypeptide reads, in one-letter code: MYLINQNGWIEVICGSMFSGKSEELIRRVRRTQFAKQHAIVFKPCIDNRYSEEDVVSHNGLKVKAVPVSASKDIFEHITEEMDVIAIDEVQFFDGDIVEVVQVLANRGYRVIVAGLDQDFRGLPFGQVPQLMAIAEHVTKLQAVCSACGSPASRTQRLIDGEPAAFDDPIILVGASESYEPRCRHCHVVPTNKDK.

ATP contacts are provided by residues 15-22 and 88-91; these read GSMFSGKS and DEVQ. Catalysis depends on E89, which acts as the Proton acceptor. The Zn(2+) site is built by C145, C148, C183, and C186.

It belongs to the thymidine kinase family. Homotetramer.

It is found in the cytoplasm. The enzyme catalyses thymidine + ATP = dTMP + ADP + H(+). The chain is Thymidine kinase from Bacillus cereus (strain 03BB102).